The chain runs to 546 residues: Glutamate--tRNA ligase (546 aa).

Residues 42–52 (PSPTGFIHLGN) carry the 'HIGH' region motif. Positions 293-297 (KLSKR) match the 'KMSKS' region motif. Lysine 296 provides a ligand contact to ATP.

It belongs to the class-I aminoacyl-tRNA synthetase family. Glutamate--tRNA ligase type 1 subfamily. Monomer.

The protein localises to the cytoplasm. It carries out the reaction tRNA(Glu) + L-glutamate + ATP = L-glutamyl-tRNA(Glu) + AMP + diphosphate. Its function is as follows. Catalyzes the attachment of glutamate to tRNA(Glu) in a two-step reaction: glutamate is first activated by ATP to form Glu-AMP and then transferred to the acceptor end of tRNA(Glu). This Acetivibrio thermocellus (strain ATCC 27405 / DSM 1237 / JCM 9322 / NBRC 103400 / NCIMB 10682 / NRRL B-4536 / VPI 7372) (Clostridium thermocellum) protein is Glutamate--tRNA ligase.